The primary structure comprises 237 residues: BTB/POZ domain-containing protein KCTD6 (237 aa).

Positions 1–104 (MDNGDWGYMM…FYQIEPLIQC (104 aa)) are interaction with ANK1 isoform Mu17. Positions 10–110 (MTDPVTLNVG…LIQCLNDPKP (101 aa)) are interaction with CUL3. The region spanning 12-81 (DPVTLNVGGH…LRTSELTLPL (70 aa)) is the BTB domain. The interval 113–187 (PMDTFEEVVE…TFGPCDYHQE (75 aa)) is interaction with USP21.

As to quaternary structure, homopentamer. Interacts with KCTD11; KCTD6 and KCTD11 may associate in pentameric assemblies. Interacts (via BTB domain) with CUL3; initially a 4:4 stoichiometry has been reported, however, electron microscopy revealed pentameric states with a five-pointed pinwheel shape. The interaction with CUL3 is indicative for a participation in a BCR (BTB-CUL3-RBX1) E3 ubiquitin-protein ligase complex. Interacts with HDAC1; probably indirect as the interaction is requires the presence of KCTD11. Interacts with USP21 (preferentially catalytic inactive form). Interacts with ANK1 isoform Mu17; detected in striated muscle. Interacts with USP11. Highly expressed in cerebellum and brain. Expression is down-regulated in medulloblastoma.

The protein resides in the cytoplasm. It is found in the myofibril. Its subcellular location is the sarcomere. The protein localises to the m line. The protein operates within protein modification; protein ubiquitination. Probable substrate-specific adapter of a BCR (BTB-CUL3-RBX1) E3 ubiquitin-protein ligase complex mediating the ubiquitination and subsequent proteasomal degradation of target proteins. Promotes the ubiquitination of HDAC1; the function seems to depend on KCTD11:KCTD6 oligomerization. Can function as antagonist of the Hedgehog pathway by affecting the nuclear transfer of transcription factor GLI1; the function probably occurs via HDAC1 down-regulation, keeping GLI1 acetylated and inactive. Inhibits cell growth and tumorigenicity of medulloblastoma (MDB). Involved in regulating protein levels of ANK1 isoform Mu17 probably implicating CUL3-dependent proteasomal degradation. The protein is BTB/POZ domain-containing protein KCTD6 (KCTD6) of Homo sapiens (Human).